A 3946-amino-acid polypeptide reads, in one-letter code: MGSLSDVRVEPIAIVGSACRFPGGANSPSKLWDLLHSPRDVLMDFPPSRLRLSNFYHKDGEHHGSTNVINKSYLLAEDPNVFDAAFFNINGLEAQAMDPQHRILLETVYEALERGGCSLDDIQGTKTSVFVGVMNADYYDIQLRDSETMARYNATGTARSIISNRISYFFDLKGASMTIDTACSSSLVALHQAVLSLQNREAEASIVAGANLLLDPTMYIAESNLHMLSPEARSRMWDKDANGYARGEGFAAVYLKPLSAALRDGDEIECIIRGTGVNSDGRTKGITMPSSVAQTELIRDTYRRAGLDPSVDRPQFVECHGTGTAAGDPVEARAVHDAFFPPSSKRDNERPLYAGSIKTIIGHLEGCAGLAGVLKASLALQNRIIPPNMHFNDLSPSVKPFYGMIQIPKQPMPWPESTTFRASVNSFGFGGTNAHVILEGYYKGGECLNGGCQQARLDSFVGPMLFSGNTQTTLRAMIKEYFDYLSANPSLDLEGLARALADRRSMFPVRAFFSGSNREALLKYMGQALISSEGSDIGTRSLASSDTPGLLGIFTGQGAQWATMGKALIHSCLLFRVSIENCEESLSTLPDPPSWSLMQELLADDKESRIGQAAFSQPLCTALQIALVDLCSASAITFDAVVGHSSGEIAAAYAAGILSAKDAIRIAYYRGLYAKLASGPDGQPGAMMAVGLSMEGAMSFIAECGLYGKVCLAASNSPSSVTLSGDKDAILQAKGFLDERKVFARQLQVDTAYHSHHMLSCADAYLKSLEACNIKPSLPRAGCVWVSSVRGDIEILEKGDFTSLNSQYWVDNMVKPVLFSQAVECSLWAGGPFDMVLELGPHPALKGPATQTLKSALGTSLPYAGIMRRATNEVEAFSGAIGYVWSHLTDYHIDFASYRESFFKEADRAPATLKDLPSYPWQHDKAYWKESRISRQFRLRHSPLHELLGRRAPDDSDSEMRWRNVLRLSELEWIRGHEFQGQALFPAMGYIAMALEAVTIATKGQQISLVDIEDFHVLQAVVLEEEHPGVEIVFSLKQTGDCKWDFNCYTCSDEWKDLTKTSTGRLILFKGEGSASELPSRPKKRANLSPLDREMFYRKLSSLGLSYHGLFKPQSSFQRSQSYATGSASWPLDQLGQEYVVHPAVMDVALHSIFVAFASPVSHELWATYLPVAIDRLSFNPNISLYGTDGALTIEIDTFITESSSSTMKGDVYLLSPDATPSILIEGVRLQSFTEAKALNDRLLFSKIVWGADIAHGFSSHAVECANKDQFELCDAMERTSLFFLQRAFAELAPCEIEQSEPQFRHLHTAFLKVIEQIKGGLHKSIHSEWLGDSWNDVNSLRRSFESSIDLEMMHAIGQSLPDVIRGRRPLLEVMMRDNLLNRFYTDGRLFVPLNLYVAKTVKAMIHKNPHMKILEIGAGTGATTKAILDTIGDTFDSYTYTDISPGFFAQAQERFALHRQQMRFQTLDIERDTVEQGFERHSYDLVVAANVLHATSHLQETMGHVRSLLRPGGYLLIVEVTGETLQLMYVMGGFPGWWLGVDDGRTDGPGIPAVQWEGLLQMTGFSGIEATVSDLPSDGKHSCSALVSQAIDDKLELFRDPLPRVGDVPIRDPILILGGGTLPVAKLVTGVRKLLRPFRWNIQHAPSVDHLTVPLEGSRSVICLSELDNPLLSEPLTDTRLSKLQAVLGSATNVLWITRDRLTDYPHSNMINGLGRTLQFELPDINIQFLDIRSGISIGADQVVTKFLQLCLVNSPEYLQDDVPWKIEPELSFDGEEWQIPRIIPYKALNDRYNATRRQIMKPLDASRQPVELACFDGRIIIREGKRVTGTSTGSVRLRTILTTRLVSSRLASFFLCMGVEADNGRTAVAITTRMGSLMDIPSTDAWFLPQRSQCDPALLYFIAGQVLAVALSFASPRSGSVILYEPTEALAEAIILSRSWVQEQPYFITSRSGTLQKGWTYIHPRVSHNIARDVLPGDTAALIDCSDDCPHWAVPTTVGKLIPLASCVVEYLTRTPSTFSSIIEHAYSESLLAALPSTAQLSASILSVEDSAGQSSSLLSYPNIVNFDCNNAVLATVAPLDCTGLFSSAKTYWMIGLNSELGLSICRWMIVQGARHIAITSRSGKVDAPWLDEIQSMNGNIKVYPMDVADREAVHSVHQEILRTMPPIAGVCNGAMVLSDKLFMNMKAEDMNKVLKPKVDGSIYLDELFCTTQLDFFILFSSLASVVGNGGQCNYHAANMFMTSLVSQRRSRGLAASVIDIGLVVDVGYVARAGQSLIDHLVNLFYTPLSESDIHKLFAEAVMASPVDSGLCPDIIMGVEPVHDISASLKKPPWYNNPIFSHLRLGTEASSQDSDQSNSTSASIRDQVSSASSVEEGTDVLLRCFAAKLEAMLSLATNSVNVNMPLLDIGVDSLLAVEIRQWFLTKLYVDIPVLKVLSGDTVVEICAEAIQKFAQMSPSAFQGTSSAASKIKQATASPPEIGREEAQSTSRAGILPTDQDNDNSSDSESQRKSGASSSSGSGTRTPTSIDEYFETNVNMLSRSGPMSYAQSRLWFQQQLVKDPTALNIVVRFDVKGYLDVDRLAAAVTATVNRHDALHSAYFAHLDTQEPLQGVIEAPGDIFQHVKVHDDNAASAIFLEMQNRHWDLERGDVFKVTLLTFPTNVQSLIIAYHHIVLDGFSWHVYLRDLSMSYQQQALPPVGPQALDFALIEAQETKNEEYNAQLEFWREELSPVPETFPLLPFSSSKVRQGMQSFQSTTATRELHFDILARAKAASQRLRVTPFHFHLAIAQVLLYKLTNIGDLCIGVTDVNRTNRKFAETVGFFLNLVPLRLRVKPTDSFTEVLHRTSKKALSAMEHSGVPIDVVLRELNIRRSSGHSPLFQVVFNYRVGDMLQVPFGGGRLELHSSIEARSPYDVVFNVTQCPSGASYLQVTSRDALYAPEVSGVICDMYIRLLEDFAGDTSMQIQDGLLNDKSEPGIGLGPRLEFGWPRTMSELFSQRAATDANSIAVKDCRGAVSYAELQQRVADITQDILGCNPPPNARVAVCIHPSRDTIAAMLATLAAGCVYVPIDITLPEARRRAILDSCRPSVILCDSTSADSIDQFAPQECRKVDLGYSPTRATTTAMPEPVADDPAFLLYSSGSTGIPKGILLPQKGYMNYLASKGHHLCLGREVVLQQSSVGFDMSIAQIGNALAHGGTVVVVPQSVRGDPVATAQLMLQEKVTFMIGTPSEYLMLLQHGGDYLRQYRDWRHACLGGESVTEPLKREFRRLSPNCPNVTDCYGPTEISAATSFNTLDLHRGAANEYSTVGRPIPNSTIYILGANGDIVPPGLVGEICIGGVGVALGYWNLPDLEKQKFIHDPFASSADRRRGWTRLYKTGDRGRLGPDGGLIFMGRLDGDTQIKLRGLRIDLEEVANSLLQVAAGLLSETVVSVRGDPEFLVAHAVPARGQKVTNSDLESFKRSLPLPQYMCPAAIVLLDRLPTTPNGKVDRKALQDKPLPTEPDSSFPTEALSLAEGELRLVWQDVLQQTAQTGRIDSRTDFFMAGGNSLLLVKLQGAIKNAYGLSIALKDLYRCSTLGRMATLIDAEKKNQPIFEKIDWEDETRVPGSLARGQRSREPKKTDLHIALTGSTGFLGMEILKALLEQPTVSKVHCLAVDAQHGQSLPKSHKIVIYPGSLNVSALGLSTREVDFLKSTVDALIHAGANGHCLNNYFSLRMPNLGSTRFLTELALSRGVPLHYVSSNRVTLLSGDVALPPGSMSAFPPPETGSDGFTASKWASERYLENVAEATGLDVCIHRPCALTGDQAPSEDALNAILRFSVLMKVVPQFPNVRGFFDFEKVGVVATNIVKKALQSVQVTRVHATSVASFAHHSSGVKVPIDKIQDRMQDLYGGVFGRLALADWVQRARTLGIEPLVASYLEAMESRGEEMAFPFLGMPSD.

Residues 9-440 enclose the Ketosynthase family 3 (KS3) domain; that stretch reads VEPIAIVGSA…GTNAHVILEG (432 aa). Residues cysteine 183, histidine 320, and histidine 363 each act as for beta-ketoacyl synthase activity in the active site. Residues 553–871 are malonyl-CoA:ACP transacylase (MAT) domain; sequence IFTGQGAQWA…PYAGIMRRAT (319 aa). Residues 945-1073 are N-terminal hotdog fold; sequence HELLGRRAPD…GRLILFKGEG (129 aa). Positions 945–1238 are dehydratase (DH) domain; the sequence is HELLGRRAPD…RLQSFTEAKA (294 aa). A PKS/mFAS DH domain is found at 945 to 1239; the sequence is HELLGRRAPD…LQSFTEAKAL (295 aa). Histidine 977 functions as the Proton acceptor; for dehydratase activity in the catalytic mechanism. The tract at residues 1088–1239 is C-terminal hotdog fold; sequence LSPLDREMFY…LQSFTEAKAL (152 aa). The active-site Proton donor; for dehydratase activity is the aspartate 1147. A methyltransferase (MT) domain region spans residues 1380 to 1580; it reads LLNRFYTDGR…ATVSDLPSDG (201 aa). The segment at 2093–2266 is ketoreductase (KR) domain; sequence TYWMIGLNSE…AASVIDIGLV (174 aa). Over residues 2352–2365 the composition is skewed to low complexity; the sequence is SSQDSDQSNSTSAS. A disordered region spans residues 2352 to 2372; sequence SSQDSDQSNSTSASIRDQVSS. The region spanning 2378–2455 is the Carrier 1 domain; it reads EGTDVLLRCF…EICAEAIQKF (78 aa). Serine 2415 is subject to O-(pantetheine 4'-phosphoryl)serine. The segment at 2474–2531 is disordered; sequence KQATASPPEIGREEAQSTSRAGILPTDQDNDNSSDSESQRKSGASSSSGSGTRTPTSI. The segment covering 2508–2530 has biased composition (low complexity); sequence DSESQRKSGASSSSGSGTRTPTS. The interval 2547–2976 is condensation (C) domain; the sequence is PMSYAQSRLW…MQIQDGLLND (430 aa). An adenylation (A) (KR) domain region spans residues 3000 to 3402; that stretch reads FSQRAATDAN…GGLIFMGRLD (403 aa). A disordered region spans residues 3492–3511; sequence GKVDRKALQDKPLPTEPDSS. In terms of domain architecture, Carrier 2 spans 3515-3594; that stretch reads EALSLAEGEL…RMATLIDAEK (80 aa). Serine 3554 is modified (O-(pantetheine 4'-phosphoryl)serine). Residues 3633–3833 form a reductase (RED) domain region; it reads LTGSTGFLGM…RFSVLMKVVP (201 aa).

In the C-terminal section; belongs to the NRP synthetase family.

In terms of biological role, hybrid PKS-NRPS synthetase; part of the gene cluster 23 that mediates the biosynthesis of a family of 2-pyridones known as leporins. The hybrid PKS-NRPS synthetase lepA and the enoyl reductase lepG are responsible for fusion of phenylalanine with a hexaketide and subsequent release of the stable tetramic acid precursor, pre-leporin C. Because lepA lacks a designated enoylreductase (ER) domain, the required activity is provided the enoyl reductase lepG. It is possible that the dehydrogenase lepF also participates in production of pre-leporin C. Cytochrome P450 monooxygenase lepH is then required for the ring expansion step to yield leporin C. Leporin C is then presumably further oxidized by the N-hydroxylase lepD to form leporin B. LepI may possess a function in biosynthesis upstream of lepA. Leporin B is further oxidized in the presence of ferric ion to give the leporin B trimer-iron chelate, but whether or not this reaction is catalyzed by an enzyme in the pathway or by ferric ion is not determined yet. The polypeptide is Hybrid PKS-NRPS synthetase lepA (Aspergillus flavus (strain ATCC 200026 / FGSC A1120 / IAM 13836 / NRRL 3357 / JCM 12722 / SRRC 167)).